A 217-amino-acid polypeptide reads, in one-letter code: Elongation factor Ts (217 aa).

An involved in Mg(2+) ion dislocation from EF-Tu region spans residues 81–84 (TDFV).

It belongs to the EF-Ts family.

It is found in the cytoplasm. Its function is as follows. Associates with the EF-Tu.GDP complex and induces the exchange of GDP to GTP. It remains bound to the aminoacyl-tRNA.EF-Tu.GTP complex up to the GTP hydrolysis stage on the ribosome. This is Elongation factor Ts from Myxococcus xanthus (strain DK1622).